The sequence spans 619 residues: Dihydroxy-acid dehydratase (619 aa).

Aspartate 81 provides a ligand contact to Mg(2+). Cysteine 122 is a binding site for [2Fe-2S] cluster. Mg(2+)-binding residues include aspartate 123 and lysine 124. The residue at position 124 (lysine 124) is an N6-carboxylysine. Cysteine 195 is a [2Fe-2S] cluster binding site. Glutamate 494 contributes to the Mg(2+) binding site. Serine 520 acts as the Proton acceptor in catalysis.

The protein belongs to the IlvD/Edd family. In terms of assembly, homodimer. [2Fe-2S] cluster is required as a cofactor. It depends on Mg(2+) as a cofactor.

It catalyses the reaction (2R)-2,3-dihydroxy-3-methylbutanoate = 3-methyl-2-oxobutanoate + H2O. The catalysed reaction is (2R,3R)-2,3-dihydroxy-3-methylpentanoate = (S)-3-methyl-2-oxopentanoate + H2O. It participates in amino-acid biosynthesis; L-isoleucine biosynthesis; L-isoleucine from 2-oxobutanoate: step 3/4. The protein operates within amino-acid biosynthesis; L-valine biosynthesis; L-valine from pyruvate: step 3/4. Functions in the biosynthesis of branched-chain amino acids. Catalyzes the dehydration of (2R,3R)-2,3-dihydroxy-3-methylpentanoate (2,3-dihydroxy-3-methylvalerate) into 2-oxo-3-methylpentanoate (2-oxo-3-methylvalerate) and of (2R)-2,3-dihydroxy-3-methylbutanoate (2,3-dihydroxyisovalerate) into 2-oxo-3-methylbutanoate (2-oxoisovalerate), the penultimate precursor to L-isoleucine and L-valine, respectively. This chain is Dihydroxy-acid dehydratase, found in Shewanella oneidensis (strain ATCC 700550 / JCM 31522 / CIP 106686 / LMG 19005 / NCIMB 14063 / MR-1).